Reading from the N-terminus, the 429-residue chain is MSELKDCPPLKYYDFKPVDHVKVCPRYTAVLSRSEDDGIGIEELDTLQLELETLLSSASRRLRALEEQRQILTDWQDKKGDKRFLKLEKDPDLAASSRHSKPKKQKLDVKGSHGPGPGPGRPKSKNIQTKVQDFEFEVDPQDIPRNPKNDAPNRFWASVEPYCADITNEEIRVLEELLKAPDDEAEYYKIPTLGKHYSQRWAQEDLLEERREGARANDKKKSMMGPLSELDAKDVDALLKKSESQHEPPEDGCPFGPLSQRLLQALVEENIISPMEDSPIPDIPGKDDGAGTSPRSQGKAFSVPHTRSLEARIREELVSQGLLDSDERQGVGGESEDEVLAELQKRQAELKALTAHNRSRKLELLKLAREEMRKQELRQRVRVADNEVMEAFRRIMAARQKKRTPTKKEKDQAWKALKERESILKLLDG.

Positions 41–70 (IEELDTLQLELETLLSSASRRLRALEEQRQ) form a coiled coil. Disordered regions lie at residues 86–132 (KLEK…TKVQ), 208–257 (EERR…PFGP), and 274–308 (PMEDSPIPDIPGKDDGAGTSPRSQGKAFSVPHTRS). 2 stretches are compositionally biased toward basic and acidic residues: residues 208-221 (EERREGARANDKKK) and 230-249 (LDAKDVDALLKKSESQHEPP). Residues 364–404 (LLKLAREEMRKQELRQRVRVADNEVMEAFRRIMAARQKKRT) are a coiled coil.

It belongs to the NGG1 family.

It is found in the nucleus. Functions as a component of the PCAF complex. The PCAF complex is capable of efficiently acetylating histones in a nucleosomal context. This chain is Transcriptional adapter 3 (tada3), found in Danio rerio (Zebrafish).